The following is a 320-amino-acid chain: Aspartate carbamoyltransferase catalytic subunit (320 aa).

Carbamoyl phosphate is bound by residues arginine 58 and threonine 59. Position 86 (lysine 86) interacts with L-aspartate. Residues arginine 108, histidine 136, and glutamine 139 each coordinate carbamoyl phosphate. L-aspartate-binding residues include arginine 169 and arginine 223. Positions 264 and 265 each coordinate carbamoyl phosphate.

This sequence belongs to the aspartate/ornithine carbamoyltransferase superfamily. ATCase family. In terms of assembly, heterododecamer (2C3:3R2) of six catalytic PyrB chains organized as two trimers (C3), and six regulatory PyrI chains organized as three dimers (R2).

The catalysed reaction is carbamoyl phosphate + L-aspartate = N-carbamoyl-L-aspartate + phosphate + H(+). The protein operates within pyrimidine metabolism; UMP biosynthesis via de novo pathway; (S)-dihydroorotate from bicarbonate: step 2/3. Functionally, catalyzes the condensation of carbamoyl phosphate and aspartate to form carbamoyl aspartate and inorganic phosphate, the committed step in the de novo pyrimidine nucleotide biosynthesis pathway. The polypeptide is Aspartate carbamoyltransferase catalytic subunit (Cereibacter sphaeroides (strain ATCC 17029 / ATH 2.4.9) (Rhodobacter sphaeroides)).